The chain runs to 292 residues: General transcription factor IIE subunit 2 (292 aa).

Met1 is modified (N-acetylmethionine). The tract at residues 17-64 (LSTPVVEKRAVPSESPSSSSSKKKKAKVEHGGSSGSKQNSDHNNGSFN) is disordered. Positions 51 to 63 (GSKQNSDHNNGSF) are enriched in polar residues. The residue at position 62 (Ser62) is a Phosphoserine. The TFIIE beta DNA-binding region spans 67–147 (ALSGSSGYKF…YAFKPKYNLK (81 aa)). Lys75 is modified (N6-acetyllysine). The tract at residues 245–277 (SMQESGPKKVASIQRRKKPASQKKRRFKTHNEH) is disordered. Basic residues predominate over residues 258–272 (QRRKKPASQKKRRFK).

It belongs to the TFIIE beta subunit family. As to quaternary structure, tetramer of two alpha and two beta chains. Interacts with FACT subunit SUPT16H. Interacts with ATF7IP. Interacts with SND1. Part of TBP-based Pol II pre-initiation complex (PIC), in which Pol II core assembles with general transcription factors and other specific initiation factors including GTF2E1, GTF2E2, GTF2F1, GTF2F2, TCEA1, ERCC2, ERCC3, GTF2H2, GTF2H3, GTF2H4, GTF2H5, GTF2A1, GTF2A2, GTF2B and TBP; this large multi-subunit PIC complex mediates DNA unwinding and targets Pol II core to the transcription start site where the first phosphodiester bond forms.

It is found in the nucleus. Recruits TFIIH to the initiation complex and stimulates the RNA polymerase II C-terminal domain kinase and DNA-dependent ATPase activities of TFIIH. Both TFIIH and TFIIE are required for promoter clearance by RNA polymerase. The protein is General transcription factor IIE subunit 2 (Gtf2e2) of Mus musculus (Mouse).